The chain runs to 79 residues: Probable [Fe-S]-dependent transcriptional repressor (79 aa).

The iron-sulfur cluster site is built by C56, C61, C64, and C70.

The protein belongs to the FeoC family.

May function as a transcriptional regulator that controls feoABC expression. This chain is Probable [Fe-S]-dependent transcriptional repressor, found in Serratia proteamaculans (strain 568).